We begin with the raw amino-acid sequence, 511 residues long: Bifunctional purine biosynthesis protein PurH (511 aa).

The 145-residue stretch at 1–145 (MKKRALVSVS…KNHKFVSVIV (145 aa)) folds into the MGS-like domain.

The protein belongs to the PurH family.

The enzyme catalyses (6R)-10-formyltetrahydrofolate + 5-amino-1-(5-phospho-beta-D-ribosyl)imidazole-4-carboxamide = 5-formamido-1-(5-phospho-D-ribosyl)imidazole-4-carboxamide + (6S)-5,6,7,8-tetrahydrofolate. It catalyses the reaction IMP + H2O = 5-formamido-1-(5-phospho-D-ribosyl)imidazole-4-carboxamide. Its pathway is purine metabolism; IMP biosynthesis via de novo pathway; 5-formamido-1-(5-phospho-D-ribosyl)imidazole-4-carboxamide from 5-amino-1-(5-phospho-D-ribosyl)imidazole-4-carboxamide (10-formyl THF route): step 1/1. The protein operates within purine metabolism; IMP biosynthesis via de novo pathway; IMP from 5-formamido-1-(5-phospho-D-ribosyl)imidazole-4-carboxamide: step 1/1. The polypeptide is Bifunctional purine biosynthesis protein PurH (Bacillus cereus (strain Q1)).